We begin with the raw amino-acid sequence, 280 residues long: Fructose-1,6-bisphosphatase class 1 (280 aa).

Mg(2+) contacts are provided by glutamate 64, aspartate 83, leucine 85, and aspartate 86. Substrate contacts are provided by residues 86–89 (DGSS), tyrosine 189, and lysine 220. Glutamate 226 is a Mg(2+) binding site.

This sequence belongs to the FBPase class 1 family. Homotetramer. Requires Mg(2+) as cofactor.

The protein localises to the cytoplasm. It catalyses the reaction beta-D-fructose 1,6-bisphosphate + H2O = beta-D-fructose 6-phosphate + phosphate. Its pathway is carbohydrate biosynthesis; gluconeogenesis. In Campylobacter jejuni subsp. jejuni serotype O:2 (strain ATCC 700819 / NCTC 11168), this protein is Fructose-1,6-bisphosphatase class 1.